The chain runs to 165 residues: Phosphopantetheine adenylyltransferase (165 aa).

Thr9 is a substrate binding site. Residues 9-10 (TF) and His17 contribute to the ATP site. The substrate site is built by Lys41, Leu73, and Arg87. ATP-binding positions include 88 to 90 (GLR), Glu98, and 123 to 129 (YQFISGT).

The protein belongs to the bacterial CoaD family. Homohexamer. It depends on Mg(2+) as a cofactor.

The protein localises to the cytoplasm. The catalysed reaction is (R)-4'-phosphopantetheine + ATP + H(+) = 3'-dephospho-CoA + diphosphate. The protein operates within cofactor biosynthesis; coenzyme A biosynthesis; CoA from (R)-pantothenate: step 4/5. Its function is as follows. Reversibly transfers an adenylyl group from ATP to 4'-phosphopantetheine, yielding dephospho-CoA (dPCoA) and pyrophosphate. The chain is Phosphopantetheine adenylyltransferase from Polynucleobacter necessarius subsp. necessarius (strain STIR1).